The following is a 2571-amino-acid chain: Stabilin-1 (2571 aa).

A signal peptide spans 1–25 (MAEPRTLLLLCVLVLCLSDSSFIRG). Residues 26–2475 (QTVRSKRCDI…RAVLGSEPPP (2450 aa)) are Extracellular-facing. 4 EGF-like domains span residues 111 to 149 (FECP…SVCQ), 157 to 194 (FGPD…PHCD), 196 to 232 (ELPV…NVCL), and 233 to 272 (APDP…KVCL). 12 disulfide bridges follow: cysteine 113/cysteine 127, cysteine 121/cysteine 137, cysteine 139/cysteine 148, cysteine 161/cysteine 172, cysteine 165/cysteine 182, cysteine 184/cysteine 193, cysteine 200/cysteine 211, cysteine 205/cysteine 218, cysteine 220/cysteine 231, cysteine 237/cysteine 248, cysteine 242/cysteine 258, and cysteine 260/cysteine 271. 2 N-linked (GlcNAc...) asparagine glycosylation sites follow: asparagine 134 and asparagine 142. N-linked (GlcNAc...) asparagine glycosylation is found at asparagine 287, asparagine 313, asparagine 416, asparagine 607, asparagine 674, asparagine 713, and asparagine 746. FAS1 domains are found at residues 357–495 (YGHL…TALR) and 507–642 (KKTV…EGIL). In terms of domain architecture, EGF-like 5 spans 729-769 (DCTQCPGGFSNPCYGKGNCSDGVRGNGACLCFPDYKGIACH). Disulfide bonds link cysteine 733–cysteine 747, cysteine 741–cysteine 757, and cysteine 759–cysteine 768. N-linked (GlcNAc...) asparagine glycosylation is present at asparagine 817. EGF-like domains are found at residues 819–859 (SMGN…NGFS), 862–904 (RSNP…RICV), 905–947 (AIDE…YECS), and 948–987 (PIDP…DGFS). Intrachain disulfides connect cysteine 823–cysteine 838, cysteine 832–cysteine 847, cysteine 866–cysteine 880, cysteine 874–cysteine 890, cysteine 892–cysteine 903, cysteine 909–cysteine 923, cysteine 917–cysteine 933, cysteine 935–cysteine 946, cysteine 952–cysteine 965, and cysteine 959–cysteine 975. 2 FAS1 domains span residues 989 to 1119 (YGDI…SQVL) and 1129 to 1254 (GPGL…SGIL). 7 N-linked (GlcNAc...) asparagine glycosylation sites follow: asparagine 1011, asparagine 1088, asparagine 1097, asparagine 1171, asparagine 1179, asparagine 1223, and asparagine 1275. The region spanning 1328 to 1393 (TLCEPCPGGL…CDCDHGLCQE (66 aa)) is the Laminin EGF-like 1 domain. Cystine bridges form between cysteine 1333–cysteine 1347, cysteine 1341–cysteine 1357, cysteine 1359–cysteine 1368, cysteine 1380–cysteine 1391, cysteine 1384–cysteine 1401, cysteine 1403–cysteine 1412, cysteine 1421–cysteine 1431, cysteine 1425–cysteine 1441, cysteine 1443–cysteine 1454, cysteine 1460–cysteine 1473, cysteine 1467–cysteine 1483, cysteine 1485–cysteine 1496, cysteine 1502–cysteine 1515, cysteine 1509–cysteine 1525, cysteine 1527–cysteine 1539, cysteine 1545–cysteine 1558, cysteine 1552–cysteine 1568, and cysteine 1570–cysteine 1582. The N-linked (GlcNAc...) asparagine glycan is linked to asparagine 1398. 4 consecutive EGF-like domains span residues 1417–1455 (TDHQ…SYCS), 1456–1497 (EVDP…ELCQ), 1498–1540 (EINS…QTCK), and 1541–1583 (LLDP…ITCH). N-linked (GlcNAc...) asparagine glycans are attached at residues asparagine 1450 and asparagine 1472. 2 consecutive FAS1 domains span residues 1583 to 1709 (HGRV…DHVL) and 1725 to 1865 (PQRN…DQLL). Asparagine 1627 and asparagine 1728 each carry an N-linked (GlcNAc...) asparagine glycan. The Laminin EGF-like 2 domain occupies 1966–2031 (INCHACPGGP…RCTQHGRCDE (66 aa)). Intrachain disulfides connect cysteine 1971/cysteine 1985, cysteine 1979/cysteine 1995, cysteine 1997/cysteine 2006, cysteine 2018/cysteine 2029, cysteine 2023/cysteine 2039, cysteine 2041/cysteine 2050, cysteine 2060/cysteine 2070, cysteine 2064/cysteine 2076, cysteine 2078/cysteine 2089, cysteine 2095/cysteine 2108, cysteine 2102/cysteine 2117, cysteine 2119/cysteine 2130, cysteine 2136/cysteine 2150, cysteine 2144/cysteine 2160, cysteine 2162/cysteine 2173, cysteine 2230/cysteine 2299, and cysteine 2254/cysteine 2275. EGF-like domains follow at residues 2056–2090 (LQPV…RVCT), 2091–2131 (VADL…WSCR), and 2132–2174 (ARDP…LQCL). Asparagine 2107 carries N-linked (GlcNAc...) asparagine glycosylation. The 94-residue stretch at 2208–2301 (GVFHIQATSG…SELWDAYCYR (94 aa)) folds into the Link domain. Asparagine 2261, asparagine 2290, asparagine 2334, asparagine 2347, asparagine 2379, asparagine 2393, asparagine 2400, and asparagine 2424 each carry an N-linked (GlcNAc...) asparagine glycan. Residues 2322-2459 (NGKLLDVLAA…GIIHALASPL (138 aa)) enclose the FAS1 7 domain. Residues 2476-2496 (VALSLGVVVTSGTLLGLVAGA) form a helical membrane-spanning segment. Topologically, residues 2497-2571 (LYLRARGKPP…PDTQRVLKVK (75 aa)) are cytoplasmic.

Interacts with CHID1.

The protein resides in the membrane. Acts as a scavenger receptor for acetylated low density lipoprotein. Binds to both Gram-positive and Gram-negative bacteria and may play a role in defense against bacterial infection. When inhibited in endothelial tube formation assays, there is a marked decrease in cell-cell interactions, suggesting a role in angiogenesis. Involved in the delivery of newly synthesized CHID1/SI-CLP from the biosynthetic compartment to the endosomal/lysosomal system. The chain is Stabilin-1 (Stab1) from Mus musculus (Mouse).